The following is a 978-amino-acid chain: Chitin synthase 3 (978 aa).

Residues 1–13 are compositionally biased toward low complexity; sequence MGFNPQGQGNGPN. 2 disordered regions span residues 1 to 95 and 108 to 127; these read MGFN…FDGH and GHYP…YEYP. A glycan (N-linked (GlcNAc...) asparagine) is linked at asparagine 72. A glycan (N-linked (GlcNAc...) asparagine) is linked at asparagine 604. 7 consecutive transmembrane segments (helical) span residues 641–661, 686–706, 719–739, 775–795, 803–823, 908–928, and 946–966; these read LVNV…TTII, IVNV…FVLA, VLSF…TGYL, LIII…FLYL, SFPQ…VYAF, VILW…DDFI, and VLLY…LWFI.

This sequence belongs to the chitin synthase family. Class III subfamily.

It localises to the cell membrane. The catalysed reaction is [(1-&gt;4)-N-acetyl-beta-D-glucosaminyl](n) + UDP-N-acetyl-alpha-D-glucosamine = [(1-&gt;4)-N-acetyl-beta-D-glucosaminyl](n+1) + UDP + H(+). Polymerizes chitin, a structural polymer of the cell wall and septum, by transferring the sugar moiety of UDP-GlcNAc to the non-reducing end of the growing chitin polymer. Is essential for viability. In Fusarium oxysporum f. sp. lycopersici (strain 4287 / CBS 123668 / FGSC 9935 / NRRL 34936) (Fusarium vascular wilt of tomato), this protein is Chitin synthase 3.